The primary structure comprises 261 residues: Indole-3-glycerol phosphate synthase (261 aa).

The protein belongs to the TrpC family.

It catalyses the reaction 1-(2-carboxyphenylamino)-1-deoxy-D-ribulose 5-phosphate + H(+) = (1S,2R)-1-C-(indol-3-yl)glycerol 3-phosphate + CO2 + H2O. It participates in amino-acid biosynthesis; L-tryptophan biosynthesis; L-tryptophan from chorismate: step 4/5. The sequence is that of Indole-3-glycerol phosphate synthase from Burkholderia multivorans (strain ATCC 17616 / 249).